A 185-amino-acid chain; its full sequence is Ribosome-recycling factor (185 aa).

This sequence belongs to the RRF family.

Its subcellular location is the cytoplasm. Responsible for the release of ribosomes from messenger RNA at the termination of protein biosynthesis. May increase the efficiency of translation by recycling ribosomes from one round of translation to another. The polypeptide is Ribosome-recycling factor (Streptococcus gordonii (strain Challis / ATCC 35105 / BCRC 15272 / CH1 / DL1 / V288)).